A 228-amino-acid chain; its full sequence is Uridylate kinase (228 aa).

Position 9–10 (9–10 (GS)) interacts with ATP. Position 44 (Gly-44) interacts with UMP. ATP-binding residues include Gly-45 and Arg-49. Residues Asp-66 and 114 to 120 (IVAAQTT) each bind UMP. Residues Thr-140, Tyr-146, and Asp-149 each contribute to the ATP site.

The protein belongs to the UMP kinase family. In terms of assembly, homohexamer.

The protein resides in the cytoplasm. The catalysed reaction is UMP + ATP = UDP + ADP. Its pathway is pyrimidine metabolism; CTP biosynthesis via de novo pathway; UDP from UMP (UMPK route): step 1/1. With respect to regulation, inhibited by UTP. In terms of biological role, catalyzes the reversible phosphorylation of UMP to UDP. This chain is Uridylate kinase, found in Haloarcula marismortui (strain ATCC 43049 / DSM 3752 / JCM 8966 / VKM B-1809) (Halobacterium marismortui).